Consider the following 236-residue polypeptide: Sugar fermentation stimulation protein homolog (236 aa).

Belongs to the SfsA family.

The polypeptide is Sugar fermentation stimulation protein homolog (Proteus mirabilis (strain HI4320)).